A 543-amino-acid chain; its full sequence is Protein MGF 505-10R (543 aa).

Belongs to the asfivirus MGF 505 family.

Plays a role in virus cell tropism, and may be required for efficient virus replication in macrophages. In Ornithodoros (relapsing fever ticks), this protein is Protein MGF 505-10R.